The sequence spans 680 residues: Tumor protein 63 (680 aa).

The segment at 1–107 is transcription activation; it reads MNFETSRCAT…MQDSDLSDPM (107 aa). The span at 123–157 shows a compositional bias: polar residues; sequence QIQNGSSSTSPYNTDHAQNSVTAPSPYAQPSSTFD. The disordered stretch occupies residues 123–171; the sequence is QIQNGSSSTSPYNTDHAQNSVTAPSPYAQPSSTFDALSPSPAIPSNTDY. The DNA-binding element occupies 170–362; it reads DYPGPHSFDV…KADEDSIRKQ (193 aa). Zn(2+) is bound by residues Cys244, His247, Cys308, and Cys312. Over residues 351-360 the composition is skewed to basic and acidic residues; it reads DRKADEDSIR. Disordered stretches follow at residues 351 to 393 and 436 to 472; these read DRKA…IKKR and RQQQQQQHQHLLQKQTSMQSQSSYGNSSPPLNKMNSM. The interval 352–388 is interaction with HIPK2; sequence RKADEDSIRKQQVSDSAKNGDGTKRPFRQNTHGIQMT. Over residues 379–389 the composition is skewed to polar residues; the sequence is RQNTHGIQMTS. Residues 394–443 are oligomerization; the sequence is RSPDDELLYLPVRGRETYEMLLKIKESLELMQYLPQHTIETYRQQQQQQH. Residues 437 to 463 show a composition bias toward low complexity; the sequence is QQQQQQHQHLLQKQTSMQSQSSYGNSS. In terms of domain architecture, SAM spans 541–607; it reads PPYPTDCSIV…WKGILDHRQL (67 aa). A transactivation inhibition region spans residues 610–680; it reads FSSPPHLLRT…KQQRIKEEGE (71 aa). Lys676 participates in a covalent cross-link: Glycyl lysine isopeptide (Lys-Gly) (interchain with G-Cter in SUMO).

Belongs to the p53 family. In terms of assembly, binds DNA as a homotetramer. Isoform composition of the tetramer may determine transactivation activity. Interacts with HIPK2. Interacts with SSRP1, leading to stimulate coactivator activity. Interacts with PDS5A. Interacts (via activation domain) with NOC2L. Interacts with WWP1. It depends on Zn(2+) as a cofactor. Post-translationally, may be sumoylated. In terms of processing, ubiquitinated. Polyubiquitination involves WWP1 and leads to proteasomal degradation of this protein. In terms of tissue distribution, widely expressed, notably in thymus, prostate, placenta and skeletal muscle, although the precise isoform varies according to tissue type. Progenitor cell layers of skin, breast and prostate express high levels of DeltaN-type isoforms.

The protein localises to the nucleus. Acts as a sequence specific DNA binding transcriptional activator or repressor. The isoforms contain a varying set of transactivation and auto-regulating transactivation inhibiting domains thus showing an isoform specific activity. May be required in conjunction with TP73/p73 for initiation of p53/TP53 dependent apoptosis in response to genotoxic insults and the presence of activated oncogenes. Involved in Notch signaling by probably inducing JAG1 and JAG2. Activates transcription of the p21 promoter. Activates RIPK4 transcription. Plays a role in the regulation of epithelial morphogenesis. The ratio of DeltaN-type and TA*-type isoforms may govern the maintenance of epithelial stem cell compartments and regulate the initiation of epithelial stratification from the undifferentiated embryonal ectoderm. Required for limb formation from the apical ectodermal ridge. This is Tumor protein 63 (Tp63) from Mus musculus (Mouse).